The primary structure comprises 917 residues: Isoleucine--tRNA ligase (917 aa).

The L-isoleucyl-5'-AMP site is built by P56, H67, E554, G555, D557, Q558, and H585. Residues 57–67 (PYANGNLHMGH) carry the 'HIGH' region motif. Residues 595-599 (KMSKS) carry the 'KMSKS' region motif. K598 is an ATP binding site. R632 and Q640 together coordinate tRNA(Ile). 4 residues coordinate Zn(2+): C886, C889, C906, and C909.

Belongs to the class-I aminoacyl-tRNA synthetase family. IleS type 1 subfamily. Monomer. Requires Zn(2+) as cofactor.

The protein localises to the cytoplasm. The catalysed reaction is tRNA(Ile) + L-isoleucine + ATP = L-isoleucyl-tRNA(Ile) + AMP + diphosphate. In terms of biological role, catalyzes the attachment of isoleucine to tRNA(Ile). As IleRS can inadvertently accommodate and process structurally similar amino acids such as valine, to avoid such errors it has two additional distinct tRNA(Ile)-dependent editing activities. One activity is designated as 'pretransfer' editing and involves the hydrolysis of activated Val-AMP. The other activity is designated 'posttransfer' editing and involves deacylation of mischarged Val-tRNA(Ile). The sequence is that of Isoleucine--tRNA ligase (ileS) from Staphylococcus aureus.